We begin with the raw amino-acid sequence, 314 residues long: Putative peptide transport system permease protein BruAb2_1031 (314 aa).

The next 6 membrane-spanning stretches (helical) occupy residues 12 to 32 (AIPV…LLPG), 101 to 121 (LALL…VVAA), 135 to 155 (LALL…VILF), 177 to 197 (WLRS…GYLA), 237 to 257 (VSVL…SVVI), and 286 to 306 (MLFL…LYTI). Residues 95–304 (LPVTISLALL…AINVLVDILY (210 aa)) enclose the ABC transmembrane type-1 domain.

This sequence belongs to the binding-protein-dependent transport system permease family. The complex is composed of two ATP-binding proteins (BruAb2_1033 and BruAb2_1034), two transmembrane proteins (BruAb2_1031 and BruAb2_1032) and a solute-binding protein (BruAb2_1030).

The protein resides in the cell inner membrane. Functionally, probably part of an ABC transporter complex that could be involved in peptide import. Probably responsible for the translocation of the substrate across the membrane. This is Putative peptide transport system permease protein BruAb2_1031 from Brucella abortus biovar 1 (strain 9-941).